Reading from the N-terminus, the 409-residue chain is Elongation factor Tu (409 aa).

One can recognise a tr-type G domain in the interval 10 to 214 (KPHVNIGTIG…AVDSYIPDPE (205 aa)). Positions 19–26 (GHVDHGKT) are G1. GTP is bound at residue 19–26 (GHVDHGKT). A Mg(2+)-binding site is contributed by Thr26. Residues 60 to 64 (GITIN) form a G2 region. The interval 81-84 (DCPG) is G3. Residues 81–85 (DCPGH) and 136–139 (NKED) each bind GTP. Positions 136–139 (NKED) are G4. The tract at residues 174-176 (SGL) is G5.

The protein belongs to the TRAFAC class translation factor GTPase superfamily. Classic translation factor GTPase family. EF-Tu/EF-1A subfamily. Monomer.

The protein localises to the cytoplasm. The catalysed reaction is GTP + H2O = GDP + phosphate + H(+). Its function is as follows. GTP hydrolase that promotes the GTP-dependent binding of aminoacyl-tRNA to the A-site of ribosomes during protein biosynthesis. This is Elongation factor Tu from Trichormus variabilis (strain ATCC 29413 / PCC 7937) (Anabaena variabilis).